The following is a 381-amino-acid chain: tRNA pseudouridine synthase D (381 aa).

Asp-81 acts as the Nucleophile in catalysis. Positions 160 to 335 (GMPNYFGSQR…TLGSRRFFWV (176 aa)) constitute a TRUD domain.

Belongs to the pseudouridine synthase TruD family.

The enzyme catalyses uridine(13) in tRNA = pseudouridine(13) in tRNA. In terms of biological role, responsible for synthesis of pseudouridine from uracil-13 in transfer RNAs. This Helicobacter pylori (strain HPAG1) protein is tRNA pseudouridine synthase D.